Reading from the N-terminus, the 444-residue chain is Ribosomal protein uS12 methylthiotransferase RimO (444 aa).

The region spanning 3 to 119 (IKIGLVSLGC…IARAVRRVLE (117 aa)) is the MTTase N-terminal domain. [4Fe-4S] cluster contacts are provided by cysteine 12, cysteine 48, cysteine 82, cysteine 156, cysteine 160, and cysteine 163. One can recognise a Radical SAM core domain in the interval 142 to 372 (ATPPYTAYLK…MMLQQEISLQ (231 aa)). The 70-residue stretch at 375 to 444 (LKRVGEVIEV…EYDLTGETVL (70 aa)) folds into the TRAM domain.

Belongs to the methylthiotransferase family. RimO subfamily. The cofactor is [4Fe-4S] cluster.

It localises to the cytoplasm. It carries out the reaction L-aspartate(89)-[ribosomal protein uS12]-hydrogen + (sulfur carrier)-SH + AH2 + 2 S-adenosyl-L-methionine = 3-methylsulfanyl-L-aspartate(89)-[ribosomal protein uS12]-hydrogen + (sulfur carrier)-H + 5'-deoxyadenosine + L-methionine + A + S-adenosyl-L-homocysteine + 2 H(+). Catalyzes the methylthiolation of an aspartic acid residue of ribosomal protein uS12. This is Ribosomal protein uS12 methylthiotransferase RimO from Pelotomaculum thermopropionicum (strain DSM 13744 / JCM 10971 / SI).